Consider the following 443-residue polypeptide: Magnesium transporter MRS2-10 (443 aa).

The segment at 1-33 (MSELKERLLPPRPASAINLRGDAGSRPSPSGRQ) is disordered. 2 consecutive transmembrane segments (helical) span residues 379–399 (LLLT…GIFG) and 415–435 (WVLA…LWYY). The Required for magnesium transport activity signature appears at 399 to 401 (GMN).

The protein belongs to the CorA metal ion transporter (MIT) (TC 1.A.35.5) family. As to expression, expressed in the whole plant.

Its subcellular location is the cell membrane. Functionally, high-affinity magnesium transporter that mediates the influx of magnesium. Involved in tolerance to Aluminum. This Arabidopsis thaliana (Mouse-ear cress) protein is Magnesium transporter MRS2-10 (MRS2-10).